The chain runs to 286 residues: ATP synthase gamma chain (286 aa).

This sequence belongs to the ATPase gamma chain family. As to quaternary structure, F-type ATPases have 2 components, CF(1) - the catalytic core - and CF(0) - the membrane proton channel. CF(1) has five subunits: alpha(3), beta(3), gamma(1), delta(1), epsilon(1). CF(0) has three main subunits: a, b and c.

The protein localises to the cell inner membrane. Produces ATP from ADP in the presence of a proton gradient across the membrane. The gamma chain is believed to be important in regulating ATPase activity and the flow of protons through the CF(0) complex. In Pseudomonas entomophila (strain L48), this protein is ATP synthase gamma chain.